A 117-amino-acid polypeptide reads, in one-letter code: Small ribosomal subunit protein eS25 (117 aa).

The interval 1-34 is disordered; it reads MPPKKDPKGGKAPPSKKKEGSGGGKAKKKKWSKG. A compositionally biased stretch (basic residues) spans 25–34; sequence KAKKKKWSKG.

The protein belongs to the eukaryotic ribosomal protein eS25 family.

In Caenorhabditis elegans, this protein is Small ribosomal subunit protein eS25 (rps-25).